We begin with the raw amino-acid sequence, 480 residues long: Probable pectin lyase F-2 (480 aa).

Residues 1-25 (MTLIRTVLMAAALLGASAHAQGVVG) form the signal peptide. Cysteine 83 and cysteine 106 form a disulfide bridge. N-linked (GlcNAc...) asparagine glycosylation occurs at asparagine 111. Arginine 256 is a catalytic residue. Cysteine 322 and cysteine 330 are disulfide-bonded. A compositionally biased stretch (low complexity) spans 386–401 (SSSAIPSSTPAPSSSA). The interval 386 to 436 (SSSAIPSSTPAPSSSALAKRHGGHDRHGLGHIPHLTEGGPGAWHTPGPAPS) is disordered.

This sequence belongs to the polysaccharide lyase 1 family.

It is found in the secreted. The catalysed reaction is Eliminative cleavage of (1-&gt;4)-alpha-D-galacturonan methyl ester to give oligosaccharides with 4-deoxy-6-O-methyl-alpha-D-galact-4-enuronosyl groups at their non-reducing ends.. Its function is as follows. Pectinolytic enzymes consist of four classes of enzymes: pectin lyase, polygalacturonase, pectin methylesterase and rhamnogalacturonase. Among pectinolytic enzymes, pectin lyase is the most important in depolymerization of pectin, since it cleaves internal glycosidic bonds of highly methylated pectins. This Aspergillus terreus (strain NIH 2624 / FGSC A1156) protein is Probable pectin lyase F-2 (pelF-2).